The chain runs to 199 residues: MSFTGTQQKCKACEKTVYAVELLSADGVGYHKSCFKCTHCKSRLQLSSYSSMEGVLYCKPHFEQLFKESGSFNKNFQSPAKSADKSTPELTRTPSRVAGRFSGTQEKCATCSKTVYPIEKVTVESQTYHKSCFKCSHGGCPISPSNYAALEGILYCKHHFAQLFKEKGSYNHLIKSASIKRSAAAAVAAGVPAASVPES.

LIM zinc-binding domains lie at 8–68 (QKCK…LFKE) and 106–166 (EKCA…LFKE).

As to quaternary structure, interacts with F-actin. In terms of tissue distribution, expressed in roots, leaves, stems, flowers and siliques. Barely detected in pollen.

The protein localises to the cytoplasm. It localises to the cytoskeleton. Binds to actin filaments and promotes cross-linking into thick bundles. Has an actin-stabilizing activity. The actin regulatory activities are not regulated by pH and [Ca(2+)]. This is LIM domain-containing protein WLIM2b from Arabidopsis thaliana (Mouse-ear cress).